Consider the following 1203-residue polypeptide: Zinc finger and BTB domain-containing protein 38 (1203 aa).

One can recognise a BTB domain in the interval 33–100 (CDVTIIVEDT…IYSSTVVVRR (68 aa)). Residue K43 forms a Glycyl lysine isopeptide (Lys-Gly) (interchain with G-Cter in SUMO2) linkage. S130 carries the post-translational modification Phosphoserine. Residues K145, K148, K151, and K260 each participate in a glycyl lysine isopeptide (Lys-Gly) (interchain with G-Cter in SUMO2) cross-link. The disordered stretch occupies residues 230–334 (EAYRSQPLRE…PSETPGPPAA (105 aa)). Residues 269-280 (TQTQDSDSTTEN) are compositionally biased toward polar residues. The interval 299-522 (PAPILSHSEP…RRYQCIFCLE (224 aa)) is interaction with CBFA2T3. The segment covering 313–322 (GDVHFPREDE) has biased composition (basic and acidic residues). A C2H2-type 1 zinc finger spans residues 341-363 (YNCSCCSKSFDSSTLLGAHMQLH). The C2H2-type 2; degenerate zinc finger occupies 370–394 (FVCKYCNKQFTTLNRLDRHEQICMR). 3 consecutive C2H2-type zinc fingers follow at residues 459 to 481 (YSCVVCKRSYVTLSSLRRHANVH), 487 to 509 (YPCHYCNKVFALAEYRTRHEIWH), and 515 to 538 (YQCIFCLETFMTYYILKNHQKSFH). Glycyl lysine isopeptide (Lys-Gly) (interchain with G-Cter in SUMO2) cross-links involve residues K549 and K556. 4 stretches are compositionally biased toward polar residues: residues 581–598 (RNSSYESAQGNRQRNESP), 607–628 (LPSSEMPTLNFQDGRNSLTSSP), 635–644 (PSWQGTPTSA), and 731–741 (SNHQSPSQPVA). Disordered regions lie at residues 581-644 (RNSS…PTSA) and 731-776 (SNHQ…VPCN). Over residues 747-757 (KDSKPEADKAS) the composition is skewed to basic and acidic residues. Glycyl lysine isopeptide (Lys-Gly) (interchain with G-Cter in SUMO2) cross-links involve residues K750, K755, K796, K806, K813, K834, K842, and K849. Disordered regions lie at residues 857–882 (KPKYQMQEETLPRESDPETRGDSPLG) and 895–914 (FDEVSDQDSTDKPWRPYYNY). The span at 866-877 (TLPRESDPETRG) shows a compositional bias: basic and acidic residues. Residues K915, K971, K976, K984, K988, K998, K1024, and K1033 each participate in a glycyl lysine isopeptide (Lys-Gly) (interchain with G-Cter in SUMO2) cross-link. 5 consecutive C2H2-type zinc fingers follow at residues 1017 to 1039 (YICELCAKQFQSSSTLKMHMRCH), 1045 to 1067 (YQCKTCGRRFSVQGNLQKHERIH), 1073 to 1095 (FICQYCNKAFTLNETLKIHERIH), 1101 to 1123 (YHCQFCFQGFLYLSTKRNHERRH), and 1132 to 1154 (FACFQCPKICKTAAALRMHQKKH). Residues K1116, K1139, K1142, K1157, and K1190 each participate in a glycyl lysine isopeptide (Lys-Gly) (interchain with G-Cter in SUMO2) cross-link. Residues 1172–1203 (NSDLLESQPCTDSEDSDQKDDIKKPLLKMSFE) form a disordered region.

Interacts with CBFA2T3, ZBTB4 and RBBP6. In terms of processing, ubiquitinated by RBBP6; leading to its degradation by the proteasome. In terms of tissue distribution, widely expressed throughout the adult brain where it is found mainly in neurons. Also expressed in the adrenal medulla. Not detected in non-neural tissues including heart, spleen, liver and muscle. In the embryo, expressed in the developing brain and spinal cord but not in the migratory neural crest. Also expressed in the limbs, transiently in somites, and in the embryonic liver. In the embryonic neural tube, expression is restricted to late postmitotic neurons.

The protein localises to the nucleus. It is found in the chromosome. Its function is as follows. Transcriptional regulator with bimodal DNA-binding specificity. Binds with a higher affinity to methylated CpG dinucleotides in the consensus sequence 5'-CGCG-3' but can also bind to E-box elements (5'-CACGTG-3'). Can also bind specifically to a single methyl-CpG pair. Represses transcription in a methyl-CpG-dependent manner. Plays an important role in regulating DNA-replication and common fragile sites (CFS) stability in a RBBP6- and MCM10-dependent manner; represses expression of MCM10 which plays an important role in DNA-replication. Acts as a transcriptional activator. May be involved in the differentiation and/or survival of late postmitotic neurons. This is Zinc finger and BTB domain-containing protein 38 from Rattus norvegicus (Rat).